The primary structure comprises 178 residues: Interleukin-10 (178 aa).

The N-terminal stretch at 1–18 (MHSSALLCCLVVLTGVRA) is a signal peptide. 2 disulfides stabilise this stretch: C30-C126 and C80-C132. A glycan (N-linked (GlcNAc...) asparagine) is linked at N134.

The protein belongs to the IL-10 family. As to quaternary structure, homodimer. Interacts with IL10RA and IL10RB.

Its subcellular location is the secreted. In terms of biological role, major immune regulatory cytokine that acts on many cells of the immune system where it has profound anti-inflammatory functions, limiting excessive tissue disruption caused by inflammation. Mechanistically, IL10 binds to its heterotetrameric receptor comprising IL10RA and IL10RB leading to JAK1 and STAT2-mediated phosphorylation of STAT3. In turn, STAT3 translocates to the nucleus where it drives expression of anti-inflammatory mediators. Targets antigen-presenting cells (APCs) such as macrophages and monocytes and inhibits their release of pro-inflammatory cytokines including granulocyte-macrophage colony-stimulating factor /GM-CSF, granulocyte colony-stimulating factor/G-CSF, IL-1 alpha, IL-1 beta, IL-6, IL-8 and TNF-alpha. Also interferes with antigen presentation by reducing the expression of MHC-class II and co-stimulatory molecules, thereby inhibiting their ability to induce T cell activation. In addition, controls the inflammatory response of macrophages by reprogramming essential metabolic pathways including mTOR signaling. The sequence is that of Interleukin-10 (IL10) from Papio hamadryas (Hamadryas baboon).